A 248-amino-acid polypeptide reads, in one-letter code: Probable transcriptional regulatory protein RL3983 (248 aa).

It belongs to the TACO1 family.

Its subcellular location is the cytoplasm. The protein is Probable transcriptional regulatory protein RL3983 of Rhizobium johnstonii (strain DSM 114642 / LMG 32736 / 3841) (Rhizobium leguminosarum bv. viciae).